We begin with the raw amino-acid sequence, 431 residues long: Glucose-1-phosphate adenylyltransferase (431 aa).

Lysine 39 is a binding site for beta-D-fructose 1,6-bisphosphate. AMP is bound by residues arginine 40, histidine 46, and arginine 52. Tyrosine 114 contributes to the alpha-D-glucose 1-phosphate binding site. Arginine 130 contributes to the AMP binding site. Residues glycine 179, 194 to 195 (EK), and serine 212 contribute to the alpha-D-glucose 1-phosphate site. 2 residues coordinate AMP: glutamate 370 and arginine 386. Beta-D-fructose 1,6-bisphosphate contacts are provided by residues 419–423 (REMLR) and 429–431 (QER).

The protein belongs to the bacterial/plant glucose-1-phosphate adenylyltransferase family. In terms of assembly, homotetramer.

The catalysed reaction is alpha-D-glucose 1-phosphate + ATP + H(+) = ADP-alpha-D-glucose + diphosphate. Its pathway is glycan biosynthesis; glycogen biosynthesis. Allosterically activated by fructose-1,6-bisphosphate (F16BP) and inhibited by AMP. Its function is as follows. Involved in the biosynthesis of ADP-glucose, a building block required for the elongation reactions to produce glycogen. Catalyzes the reaction between ATP and alpha-D-glucose 1-phosphate (G1P) to produce pyrophosphate and ADP-Glc. The polypeptide is Glucose-1-phosphate adenylyltransferase (Shigella boydii serotype 18 (strain CDC 3083-94 / BS512)).